A 216-amino-acid polypeptide reads, in one-letter code: Twisted gastrulation protein homolog 1-A (216 aa).

The signal sequence occupies residues 1–25 (MKPSFLHIPAAALLLCSLWILPIYC). N-linked (GlcNAc...) asparagine glycosylation is found at Asn-52, Asn-81, and Asn-145.

This sequence belongs to the twisted gastrulation protein family. In terms of assembly, binds directly to bmp2, bmp4 and bmp7 and can form a ternary complex with bmps and chordin, thus preventing the binding of bmps to their cell surface receptors. In terms of tissue distribution, posterior defects are induced by overexpression. This may arise through alteration of bmp4 or chrd function in the developing tailbud region.

It localises to the secreted. In terms of biological role, involved in dorsal-ventral patterning, permitting peak BMP signaling by antagonizing the residual anti-BMP activity of the cleavage products of chrd. Functions to promote the formation of ventral mesoderm by increasing the activity of bmp7 and other BMPS. Seems to antagonize BMP signaling by forming ternary complexes with chrd and BMPs, thereby preventing BMPs from binding to their receptors. In addition to the anti-BMP function, also has pro-BMP activity, partly mediated by cleavage and degradation of chrd, which releases BMPs from ternary complexes. May be an important modulator of BMP-regulated cartilage development and chondrocyte differentiation. The chain is Twisted gastrulation protein homolog 1-A (twsg1-a) from Xenopus laevis (African clawed frog).